We begin with the raw amino-acid sequence, 359 residues long: Peptide chain release factor 1 (359 aa).

Q235 bears the N5-methylglutamine mark.

The protein belongs to the prokaryotic/mitochondrial release factor family. Post-translationally, methylated by PrmC. Methylation increases the termination efficiency of RF1.

It localises to the cytoplasm. Functionally, peptide chain release factor 1 directs the termination of translation in response to the peptide chain termination codons UAG and UAA. In Methylibium petroleiphilum (strain ATCC BAA-1232 / LMG 22953 / PM1), this protein is Peptide chain release factor 1.